The sequence spans 156 residues: MLNRTILVGRLTRDPELRTTQSGVNVASFTLAVNRTFTNAQGEREADFINIIVFKKQAENVNKYLSKGSLAGVDGRLQTRNYENKEGQRVYVTEVVADSIQFLEPKNTDDNQQDLYQQQAQQTRGQSQYSNNKPVKDNPFANANCPIEIDDNDLPF.

In terms of domain architecture, SSB spans 1–104; sequence MLNRTILVGR…VVADSIQFLE (104 aa). The interval 122–146 is disordered; the sequence is QTRGQSQYSNNKPVKDNPFANANCP.

In terms of assembly, homotetramer.

The protein is Single-stranded DNA-binding protein 1 (ssb1) of Staphylococcus aureus (strain MSSA476).